We begin with the raw amino-acid sequence, 99 residues long: ATP-dependent Clp protease adapter protein ClpS (99 aa).

Belongs to the ClpS family. In terms of assembly, binds to the N-terminal domain of the chaperone ClpA.

Involved in the modulation of the specificity of the ClpAP-mediated ATP-dependent protein degradation. The polypeptide is ATP-dependent Clp protease adapter protein ClpS (Helicobacter hepaticus (strain ATCC 51449 / 3B1)).